The following is a 224-amino-acid chain: Pyridoxal 5'-phosphate synthase subunit PdxT (224 aa).

55 to 57 (GES) contributes to the L-glutamine binding site. The active-site Nucleophile is Cys-87. Residues Arg-113 and 142–143 (IR) each bind L-glutamine. Active-site charge relay system residues include His-178 and Glu-180.

The protein belongs to the glutaminase PdxT/SNO family. In terms of assembly, in the presence of PdxS, forms a dodecamer of heterodimers. Only shows activity in the heterodimer.

The catalysed reaction is aldehydo-D-ribose 5-phosphate + D-glyceraldehyde 3-phosphate + L-glutamine = pyridoxal 5'-phosphate + L-glutamate + phosphate + 3 H2O + H(+). It carries out the reaction L-glutamine + H2O = L-glutamate + NH4(+). It functions in the pathway cofactor biosynthesis; pyridoxal 5'-phosphate biosynthesis. In terms of biological role, catalyzes the hydrolysis of glutamine to glutamate and ammonia as part of the biosynthesis of pyridoxal 5'-phosphate. The resulting ammonia molecule is channeled to the active site of PdxS. In Syntrophus aciditrophicus (strain SB), this protein is Pyridoxal 5'-phosphate synthase subunit PdxT.